Reading from the N-terminus, the 228-residue chain is Urease accessory protein UreF (228 aa).

It belongs to the UreF family. In terms of assembly, ureD, UreF and UreG form a complex that acts as a GTP-hydrolysis-dependent molecular chaperone, activating the urease apoprotein by helping to assemble the nickel containing metallocenter of UreC. The UreE protein probably delivers the nickel.

It localises to the cytoplasm. Required for maturation of urease via the functional incorporation of the urease nickel metallocenter. This Dechloromonas aromatica (strain RCB) protein is Urease accessory protein UreF.